Consider the following 302-residue polypeptide: Zinc finger protein-like 1 homolog (302 aa).

The B box-type; degenerate zinc-finger motif lies at 1-43 (MGLCKCPKRLVTNQFCFEHRVNVCEHCMVQSHPKCIVQSYLQW). The RING-type; atypical zinc-finger motif lies at 53–101 (CNLCGTSLEQGECVRLVCYHVFHWDCLNARQAALPANTAPRGHQCPGCS). The interval 168–233 (IHSGGERERG…RDDNKYQRRT (66 aa)) is disordered. Residues 198–208 (PPSSGDFNASS) show a composition bias toward polar residues. A Phosphoserine modification is found at Ser217. Residues 258–278 (WFLVLSGILAFVMFIYLLAWM) form a helical membrane-spanning segment.

It belongs to the ZFPL1 family.

The protein localises to the membrane. This is Zinc finger protein-like 1 homolog from Drosophila pseudoobscura pseudoobscura (Fruit fly).